Reading from the N-terminus, the 157-residue chain is MIEALEIVLLLVIQSLQYICRTCIAFLLIPFLGLYAFDLFLYVYRMILYLSQMFNYKRKLGRSKTNNRPHSPRLHKIYSSGDCMDTLIGQVRDLRVFLLSTIHSHSKRFFSTRFQTKSGINSAIDANDVETTSDVSSFTNLHLTRSSEEGYYIAGSI.

At 1-6 the chain is on the cytoplasmic side; that stretch reads MIEALE. The helical transmembrane segment at 7–29 threads the bilayer; that stretch reads IVLLLVIQSLQYICRTCIAFLLI. The Lumenal segment spans residues 30 to 33; the sequence is PFLG. The chain crosses the membrane as a helical span at residues 34 to 56; sequence LYAFDLFLYVYRMILYLSQMFNY. Topologically, residues 57 to 157 are cytoplasmic; sequence KRKLGRSKTN…EEGYYIAGSI (101 aa).

Its subcellular location is the endoplasmic reticulum membrane. Functionally, is probably involved in a pathway contributing to genomic integrity. This chain is Increased recombination centers protein 23 (IRC23), found in Saccharomyces cerevisiae (strain ATCC 204508 / S288c) (Baker's yeast).